The sequence spans 227 residues: Cytochrome c oxidase subunit 2 (227 aa).

Over 1–14 the chain is Mitochondrial intermembrane; that stretch reads MAYPFELGFQDATS. A helical transmembrane segment spans residues 15 to 45; the sequence is PIMEELLHFHDHTLMIVFLISSLVLYIISLM. Residues 46–59 lie on the Mitochondrial matrix side of the membrane; the sequence is LTTKLTHTSTMDAQ. Residues 60 to 87 traverse the membrane as a helical segment; the sequence is EVETIWTILPAIILILIALPSLRILYMM. At 88-227 the chain is on the mitochondrial intermembrane side; the sequence is DEINDPSLTV…HFENWSSSML (140 aa). The Cu cation site is built by histidine 161, cysteine 196, glutamate 198, cysteine 200, histidine 204, and methionine 207. Glutamate 198 serves as a coordination point for Mg(2+).

The protein belongs to the cytochrome c oxidase subunit 2 family. As to quaternary structure, component of the cytochrome c oxidase (complex IV, CIV), a multisubunit enzyme composed of 14 subunits. The complex is composed of a catalytic core of 3 subunits MT-CO1, MT-CO2 and MT-CO3, encoded in the mitochondrial DNA, and 11 supernumerary subunits COX4I, COX5A, COX5B, COX6A, COX6B, COX6C, COX7A, COX7B, COX7C, COX8 and NDUFA4, which are encoded in the nuclear genome. The complex exists as a monomer or a dimer and forms supercomplexes (SCs) in the inner mitochondrial membrane with NADH-ubiquinone oxidoreductase (complex I, CI) and ubiquinol-cytochrome c oxidoreductase (cytochrome b-c1 complex, complex III, CIII), resulting in different assemblies (supercomplex SCI(1)III(2)IV(1) and megacomplex MCI(2)III(2)IV(2)). Found in a complex with TMEM177, COA6, COX18, COX20, SCO1 and SCO2. Interacts with TMEM177 in a COX20-dependent manner. Interacts with COX20. Interacts with COX16. It depends on Cu cation as a cofactor.

It localises to the mitochondrion inner membrane. The enzyme catalyses 4 Fe(II)-[cytochrome c] + O2 + 8 H(+)(in) = 4 Fe(III)-[cytochrome c] + 2 H2O + 4 H(+)(out). Functionally, component of the cytochrome c oxidase, the last enzyme in the mitochondrial electron transport chain which drives oxidative phosphorylation. The respiratory chain contains 3 multisubunit complexes succinate dehydrogenase (complex II, CII), ubiquinol-cytochrome c oxidoreductase (cytochrome b-c1 complex, complex III, CIII) and cytochrome c oxidase (complex IV, CIV), that cooperate to transfer electrons derived from NADH and succinate to molecular oxygen, creating an electrochemical gradient over the inner membrane that drives transmembrane transport and the ATP synthase. Cytochrome c oxidase is the component of the respiratory chain that catalyzes the reduction of oxygen to water. Electrons originating from reduced cytochrome c in the intermembrane space (IMS) are transferred via the dinuclear copper A center (CU(A)) of subunit 2 and heme A of subunit 1 to the active site in subunit 1, a binuclear center (BNC) formed by heme A3 and copper B (CU(B)). The BNC reduces molecular oxygen to 2 water molecules using 4 electrons from cytochrome c in the IMS and 4 protons from the mitochondrial matrix. The sequence is that of Cytochrome c oxidase subunit 2 (MT-CO2) from Neotamias bulleri (Buller's chipmunk).